The primary structure comprises 942 residues: MNWNKGGPGTKRGFGFGGFAISAGKKEEPKLPQQSHSAFGATSSSSGFGKSAPPQLPSFYKIGSKRANFDEENAYFEDEEEDSSNVDLPYIPAENSPTRQQFHSKPIDSDSDDDPLEAFMAEVEDQAARDMKRLEEKDKERKNVKGIRDDIEEEDDQETYFRYMAENPTAGVVQEEEEDNLEYDSDGNPIAPTKKIIDPLPPIDHSEIDYPPFEKNFYNEHEEITNLTPQQLIDLRHKLNLRVSGAAPPRPGSSFAHFGFDEQLMHQIRKSEYTQPTPIQCQGVPVALSGRDMIGIAKTGSGKTAAFIWPMLIHIMDQKELEPGDGPIAVIVCPTRELCQQIHAEGKRFGKAYNLRSVAVYGGGSMWEQAKALQEGAEIVVCTPGRLIDHVKKKATNLQRVSYLVFDEADRMFDMGFEYQVRSIASHVRPDRQTLLFSATFRKKIEKLARDILIDPIRVVQGDIGEANEDVTQIVEILHSGPSKWNWLTRRLVEFTSSGSVLLFVTKKANAEELANNLKQEGHNLGLLHGDMDQSERNKVISDFKKKDIPVLVATDVAARGLDIPSIKTVINYDVARDIDTHTHRIGRTGRAGEKGVAYTLLTPKDSNFAGDLVRNLEGANQHVSKELLDLAMQNAWFRKSRFKGGKGKKLNIGGGGLGYRERPGLGSENMDRGNNNVMSNYEAYKPSTGAMGDRLTAMKAAFQSQYKSHFVAASLSNQKAGSSAAGASGWTSAGSLNSVPTNSAQQGHNSPDSPITSATKGIPGFGNIGNISGAPVTYPSAGAQGVNNTASGNNSREGTGGSNGKRERYTENRGSSRHSHGETGNRHSDSPRHGDGGRHGDGYRHPESSSRHTDGHRHGENRHGGSAGRHGENRGANDGRNGESRKEACNRESKMEPKMEPKMEPKVDSNKMDKVDSKTDKTADGFAVPEPPKRKKSRWDS.

Over residues 1 to 18 (MNWNKGGPGTKRGFGFGG) the composition is skewed to gly residues. Residues 1–114 (MNWNKGGPGT…KPIDSDSDDD (114 aa)) are disordered. K5 is subject to N6-acetyllysine. R12 bears the Omega-N-methylarginine mark. Low complexity predominate over residues 35–52 (SHSAFGATSSSSGFGKSA). A Phosphoserine modification is found at S58. Acidic residues predominate over residues 70 to 84 (DEENAYFEDEEEDSS). 4 positions are modified to phosphoserine: S96, S104, S109, and S111. A coiled-coil region spans residues 116-157 (LEAFMAEVEDQAARDMKRLEEKDKERKNVKGIRDDIEEEDDQ). The tract at residues 182–203 (EYDSDGNPIAPTKKIIDPLPPI) is disordered. Position 185 is a phosphoserine (S185). The Q motif signature appears at 253–281 (SSFAHFGFDEQLMHQIRKSEYTQPTPIQC). In terms of domain architecture, Helicase ATP-binding spans 284-459 (VPVALSGRDM…RDILIDPIRV (176 aa)). 297–304 (AKTGSGKT) lines the ATP pocket. The DEAD box signature appears at 407 to 410 (DEAD). Residues 487-632 (WLTRRLVEFT…HVSKELLDLA (146 aa)) enclose the Helicase C-terminal domain. Composition is skewed to polar residues over residues 737–760 (LNSVPTNSAQQGHNSPDSPITSAT) and 786–798 (GVNNTASGNNSRE). Disordered regions lie at residues 737-762 (LNSVPTNSAQQGHNSPDSPITSATKG) and 783-942 (GAQG…RWDS). The interval 738-833 (NSVPTNSAQQ…TGNRHSDSPR (96 aa)) is necessary for interaction with TP53BP2. Phosphoserine is present on S754. Residues 820-924 (SHGETGNRHS…KVDSKTDKTA (105 aa)) are compositionally biased toward basic and acidic residues. K899 participates in a covalent cross-link: Glycyl lysine isopeptide (Lys-Gly) (interchain with G-Cter in SUMO2).

Belongs to the DEAD box helicase family. DDX42 subfamily. In terms of assembly, transient component of the SF3B subcomplex of the 17S U2 SnRNP complex. Interacts (via the C-terminus) with TP53BP2; the interaction is not inhibitied by TP53BP2 ubiquitination and is independent of p53/TP53.

The protein resides in the cytoplasm. Its subcellular location is the nucleus. It catalyses the reaction ATP + H2O = ADP + phosphate + H(+). ATP-dependent RNA helicase that binds to partially double-stranded RNAs (dsRNAs) in order to unwind RNA secondary structures. Unwinding is promoted in the presence of single-strand binding proteins. Also mediates RNA duplex formation thereby displacing the single-strand RNA binding protein. ATP and ADP modulate its activity: ATP binding and hydrolysis by DDX42 triggers RNA strand separation, whereas the ADP-bound form of the protein triggers annealing of complementary RNA strands. Required for assembly of the 17S U2 SnRNP complex of the spliceosome, a large ribonucleoprotein complex that removes introns from transcribed pre-mRNAs: DDX42 associates transiently with the SF3B subcomplex of the 17S U2 SnRNP complex and is released after fulfilling its role in the assembly of 17S U2 SnRNP. Involved in the survival of cells by interacting with TP53BP2 and thereby counteracting the apoptosis-stimulating activity of TP53BP2. Relocalizes TP53BP2 to the cytoplasm. The chain is ATP-dependent RNA helicase DDX42 (DDX42) from Pongo abelii (Sumatran orangutan).